The following is a 376-amino-acid chain: N-acetyldiaminopimelate deacetylase (376 aa).

Asp70 is an active-site residue. Residue Glu129 is the Proton acceptor of the active site.

Belongs to the peptidase M20A family. N-acetyldiaminopimelate deacetylase subfamily.

It catalyses the reaction N-acetyl-(2S,6S)-2,6-diaminopimelate + H2O = (2S,6S)-2,6-diaminopimelate + acetate. It participates in amino-acid biosynthesis; L-lysine biosynthesis via DAP pathway; LL-2,6-diaminopimelate from (S)-tetrahydrodipicolinate (acetylase route): step 3/3. Its function is as follows. Catalyzes the conversion of N-acetyl-diaminopimelate to diaminopimelate and acetate. The sequence is that of N-acetyldiaminopimelate deacetylase from Geobacillus sp. (strain WCH70).